Reading from the N-terminus, the 318-residue chain is Taste receptor type 2 member 60 (318 aa).

The Extracellular portion of the chain corresponds to 1–7 (MNGDHMV). Residues 8 to 28 (LGSSVTDQKAIILVIILLLLC) traverse the membrane as a helical segment. At 29–40 (LVAIAGNGFITA) the chain is on the cytoplasmic side. Residues 41-61 (ALGVEWVLRGTLLPCDKLLVS) traverse the membrane as a helical segment. Over 62 to 88 (LRASRFCLQWVVMGKTIYVLLYPTAFP) the chain is Extracellular. A helical transmembrane segment spans residues 89–109 (YNPVLQFLAFQWDFLNAATLW). Over 110-128 (FSSWLSVFYCVKIATFTHP) the chain is Cytoplasmic. A helical membrane pass occupies residues 129-149 (VFLWLKHKLSEWVPWMFFSSV). The Extracellular segment spans residues 150–183 (GLSSFTTILFFIGNHSIYQNYLRNHLQPWNVTGN). 2 N-linked (GlcNAc...) asparagine glycosylation sites follow: N163 and N179. A helical membrane pass occupies residues 184–204 (SIWSYCEKFYLFPVKMITWTM). Residues 205–234 (PTAVFFICMILLITSLGRHMEKALLTTSGF) are Cytoplasmic-facing. The chain crosses the membrane as a helical span at residues 235-255 (REPSVQAHVKALLALLSLAML). Over 256 to 264 (FISYFLSLV) the chain is Extracellular. The chain crosses the membrane as a helical span at residues 265 to 285 (LSAAGIFPPLDFKFWVGESVI). The Cytoplasmic portion of the chain corresponds to 286-318 (YLCAGVHPIILLFSNRRLRAVLERCRSSRCRTP).

Belongs to the G-protein coupled receptor T2R family.

The protein resides in the membrane. Receptor that may play a role in the perception of bitterness and is gustducin-linked. May play a role in sensing the chemical composition of the gastrointestinal content. The activity of this receptor may stimulate alpha gustducin, mediate PLC-beta-2 activation and lead to the gating of TRPM5. In Macaca mulatta (Rhesus macaque), this protein is Taste receptor type 2 member 60 (TAS2R60).